An 88-amino-acid polypeptide reads, in one-letter code: Small ribosomal subunit protein uS17 (88 aa).

It belongs to the universal ribosomal protein uS17 family. As to quaternary structure, part of the 30S ribosomal subunit.

Functionally, one of the primary rRNA binding proteins, it binds specifically to the 5'-end of 16S ribosomal RNA. This is Small ribosomal subunit protein uS17 from Nitratidesulfovibrio vulgaris (strain DSM 19637 / Miyazaki F) (Desulfovibrio vulgaris).